A 432-amino-acid chain; its full sequence is Asparagine--tRNA ligase (432 aa).

The protein belongs to the class-II aminoacyl-tRNA synthetase family. In terms of assembly, homodimer.

It is found in the cytoplasm. It catalyses the reaction tRNA(Asn) + L-asparagine + ATP = L-asparaginyl-tRNA(Asn) + AMP + diphosphate + H(+). The sequence is that of Asparagine--tRNA ligase from Lactobacillus delbrueckii subsp. bulgaricus (strain ATCC 11842 / DSM 20081 / BCRC 10696 / JCM 1002 / NBRC 13953 / NCIMB 11778 / NCTC 12712 / WDCM 00102 / Lb 14).